Reading from the N-terminus, the 228-residue chain is MTGGEQKPNEIIGVRRGLFGVRGSGDTSGYGGLVQPISLPVSSNRPYGGYFDQVVDRLESVLAEQENVTYADAVEGVVVYRDQLTIHVKAEHLVQVAQSLRDDPQLRFELSLGVSGVHYPDDSARELHAVYPLMSITWNRRIMLEVAVPESDPHIPSLNAVYPTTDWHERETYDFFGIIFDDHPALTRIQMPDDWDGHPQRKDYPLGGVPVEYHGATIAPPDQRRSYN.

The protein belongs to the complex I 30 kDa subunit family. NDH-1 is composed of 14 different subunits. Subunits NuoB, C, D, E, F, and G constitute the peripheral sector of the complex.

The protein localises to the cell membrane. The catalysed reaction is a quinone + NADH + 5 H(+)(in) = a quinol + NAD(+) + 4 H(+)(out). Functionally, NDH-1 shuttles electrons from NADH, via FMN and iron-sulfur (Fe-S) centers, to quinones in the respiratory chain. The immediate electron acceptor for the enzyme in this species is believed to be a menaquinone. Couples the redox reaction to proton translocation (for every two electrons transferred, four hydrogen ions are translocated across the cytoplasmic membrane), and thus conserves the redox energy in a proton gradient. The sequence is that of NADH-quinone oxidoreductase subunit C from Mycobacteroides abscessus (strain ATCC 19977 / DSM 44196 / CCUG 20993 / CIP 104536 / JCM 13569 / NCTC 13031 / TMC 1543 / L948) (Mycobacterium abscessus).